Reading from the N-terminus, the 331-residue chain is UBX domain-containing protein 2B (331 aa).

2 stretches are compositionally biased toward basic and acidic residues: residues 1 to 16 (MAEG…ERGS) and 37 to 48 (DEMKCKSSKPDR). Residues 1 to 70 (MAEGGRAEPE…PHRLYSGDHK (70 aa)) are disordered. An N-acetylalanine modification is found at A2. Residue S56 is modified to Phosphoserine. Residue T59 is modified to Phosphothreonine. S66 carries the phosphoserine modification. One can recognise an SEP domain in the interval 141 to 206 (DVQVLLKLWR…MEDHQDQEYI (66 aa)). 3 positions are modified to phosphoserine: S231, S234, and S235. The 78-residue stretch at 252-329 (DSMPTTKIQI…DILNTVILQQ (78 aa)) folds into the UBX domain.

It belongs to the NSFL1C family. In terms of assembly, interacts with VCP. Does not bind ubiquitin.

The protein resides in the nucleus. Its subcellular location is the cytoplasm. The protein localises to the cytosol. It localises to the endoplasmic reticulum. It is found in the golgi apparatus. The protein resides in the cytoskeleton. Its subcellular location is the microtubule organizing center. The protein localises to the centrosome. Adapter protein required for Golgi and endoplasmic reticulum biogenesis. Involved in Golgi and endoplasmic reticulum maintenance during interphase and in their reassembly at the end of mitosis. The complex formed with VCP has membrane fusion activity; membrane fusion activity requires USO1-GOLGA2 tethering and BET1L. VCPIP1 is also required, but not its deubiquitinating activity. Together with NSFL1C/p47, regulates the centrosomal levels of kinase AURKA/Aurora A during mitotic progression by promoting AURKA removal from centrosomes in prophase. Also, regulates spindle orientation during mitosis. The chain is UBX domain-containing protein 2B (Ubxn2b) from Mus musculus (Mouse).